A 75-amino-acid chain; its full sequence is Small ribosomal subunit protein bS18c (75 aa).

Belongs to the bacterial ribosomal protein bS18 family. As to quaternary structure, part of the 30S ribosomal subunit.

The protein localises to the plastid. The protein resides in the chloroplast. This Psilotum nudum (Whisk fern) protein is Small ribosomal subunit protein bS18c.